The sequence spans 221 residues: ATP-dependent Clp protease proteolytic subunit 3 (221 aa).

Ser-118 (nucleophile) is an active-site residue. Residue His-143 is part of the active site.

The protein belongs to the peptidase S14 family. Fourteen ClpP subunits assemble into 2 heptameric rings which stack back to back to give a disk-like structure with a central cavity, resembling the structure of eukaryotic proteasomes.

The protein resides in the cytoplasm. It carries out the reaction Hydrolysis of proteins to small peptides in the presence of ATP and magnesium. alpha-casein is the usual test substrate. In the absence of ATP, only oligopeptides shorter than five residues are hydrolyzed (such as succinyl-Leu-Tyr-|-NHMec, and Leu-Tyr-Leu-|-Tyr-Trp, in which cleavage of the -Tyr-|-Leu- and -Tyr-|-Trp bonds also occurs).. Cleaves peptides in various proteins in a process that requires ATP hydrolysis. Has a chymotrypsin-like activity. Plays a major role in the degradation of misfolded proteins. The protein is ATP-dependent Clp protease proteolytic subunit 3 of Nocardia farcinica (strain IFM 10152).